We begin with the raw amino-acid sequence, 499 residues long: MAMAEGERTECAEPPRDEPPADGALKRAEELKTQANDYFKAKDYENAIKFYSQAIELNPSNAIYYGNRSLAYLRTECYGYALGDATRAIELDKKYIKGYYRRAASNMALGKFRAALRDYETVVKVKPHDKDAKMKYQECNKIVKQKAFERAIAGDEHKRSVVDSLDIESMTIEDEYSGPKLEDGKVTISFMKELMQWYKDQKKLHRKCAYQILVQVKEVLSKLSTLVETTLKETEKITVCGDTHGQFYDLLNIFELNGLPSETNPYIFNGDFVDRGSFSVEVILTLFGFKLLYPDHFHLLRGNHETDNMNQIYGFEGEVKAKYTAQMYELFSEVFEWLPLAQCINGKVLIMHGGLFSEDGVTLDDIRKIERNRQPPDSGPMCDLLWSDPQPQNGRSISKRGVSCQFGPDVTKAFLEENNLDYIIRSHEVKAEGYEVAHGGRCVTVFSAPNYCDQMGNKASYIHLQGSDLRPQFHQFTAVPHPNVKPMAYANTLLQLGMM.

Residues 1–23 (MAMAEGERTECAEPPRDEPPADG) are disordered. Ala2 is subject to N-acetylalanine. TPR repeat units follow at residues 28-61 (AEEL…NPSN), 62-95 (AIYY…DKKY), and 96-129 (IKGY…KPHD). A catalytic region spans residues 184-499 (GKVTISFMKE…ANTLLQLGMM (316 aa)). 3 residues coordinate Mn(2+): Asp242, His244, and Asp271. His244 is a substrate binding site. Substrate is bound by residues Arg275 and 303–304 (NH). Residue Asn303 coordinates Mn(2+). His304 functions as the Proton donor/acceptor in the catalytic mechanism. His352 serves as a coordination point for Mn(2+). Substrate is bound by residues Arg400 and His427. A Mn(2+)-binding site is contributed by His427. Residues 495-499 (QLGMM) are required for autoinhibition.

This sequence belongs to the PPP phosphatase family. PP-5 (PP-T) subfamily. Probably forms a complex composed of chaperones HSP90 and HSP70, co-chaperones STIP1/HOP, CDC37, PPP5C, PTGES3/p23, TSC1 and client protein TSC2. Probably forms a complex composed of chaperones HSP90 and HSP70, co-chaperones CDC37, PPP5C, TSC1 and client protein TSC2, CDK4, AKT, RAF1 and NR3C1; this complex does not contain co-chaperones STIP1/HOP and PTGES3/p23. Part of a complex with HSP90/HSP90AA1 and steroid receptors. Interacts (via TPR repeats) with HSP90AA1 (via TPR repeat-binding motif) or HSPA1A/HSPA1B; the interaction is direct and activates the phosphatase activity. Dissociates from HSPA1A/HSPA1B and HSP90AA1 in response to arachidonic acid. Interacts with CPNE1 (via VWFA domain). Interacts with CDC16, CDC27. Interacts with KLHDC10 (via the 6 Kelch repeats); inhibits the phosphatase activity on MAP3K5. Interacts with ATM and ATR; both interactions are induced by DNA damage and enhance ATM and ATR kinase activity. Interacts with RAD17; reduced by DNA damage. Interacts with nuclear receptors such as NR3C1/GCR and PPARG (activated by agonist); regulates their transactivation activities. Interacts (via TPR repeats) with S100 proteins S100A1, S100A2, S100A6, S100B and S100P; the interactions are calcium-dependent, strongly activate PPP5C phosphatase activity and compete with HSP90AA1 and MAP3K5 interactions. Interacts with SMAD2 and SMAD3 but not with SMAD1; decreases SMAD3 phosphorylation and protein levels. Interacts (via TPR repeats) with CRY1 and CRY2; the interaction with CRY2 down-regulates the phosphatase activity on CSNK1E. Interacts (via TPR repeats) with the active form of RAC1, GNA12 or GNA13; these interactions activate the phosphatase activity and translocate PPP5C to the cell membrane. Interacts with FLCN. Mg(2+) serves as cofactor. The cofactor is Mn(2+). Post-translationally, activated by at least two different proteolytic cleavages producing a 56 kDa and a 50 kDa form. Ubiquitous.

The protein resides in the nucleus. The protein localises to the cytoplasm. It is found in the cell membrane. The catalysed reaction is O-phospho-L-seryl-[protein] + H2O = L-seryl-[protein] + phosphate. The enzyme catalyses O-phospho-L-threonyl-[protein] + H2O = L-threonyl-[protein] + phosphate. Autoinhibited. In the autoinhibited state, the TPR domain interacts with the catalytic region and prevents substrate access to the catalytic pocket. Allosterically activated by various polyunsaturated fatty acids, free long-chain fatty-acids and long-chain fatty acyl-CoA esters, arachidonic acid being the most effective activator. HSP90A and probably RAC1, GNA12 and GNA13 can also release the autoinhibition by the TPR repeat. Activation by RAC1, GNA12 and GNA13 is synergistic with the one produced by fatty acids binding. Inhibited by okadaic acid. Serine/threonine-protein phosphatase that dephosphorylates a myriad of proteins involved in different signaling pathways including the kinases CSNK1E, ASK1/MAP3K5, PRKDC and RAF1, the nuclear receptors NR3C1, PPARG, ESR1 and ESR2, SMAD proteins and TAU/MAPT. Implicated in wide ranging cellular processes, including apoptosis, differentiation, DNA damage response, cell survival, regulation of ion channels or circadian rhythms, in response to steroid and thyroid hormones, calcium, fatty acids, TGF-beta as well as oxidative and genotoxic stresses. Participates in the control of DNA damage response mechanisms such as checkpoint activation and DNA damage repair through, for instance, the regulation ATM/ATR-signaling and dephosphorylation of PRKDC and TP53BP1. Inhibits ASK1/MAP3K5-mediated apoptosis induced by oxidative stress. Plays a positive role in adipogenesis, mainly through the dephosphorylation and activation of PPARG transactivation function. Also dephosphorylates and inhibits the anti-adipogenic effect of NR3C1. Regulates the circadian rhythms, through the dephosphorylation and activation of CSNK1E. May modulate TGF-beta signaling pathway by the regulation of SMAD3 phosphorylation and protein expression levels. Dephosphorylates and may play a role in the regulation of TAU/MAPT. Through their dephosphorylation, may play a role in the regulation of ions channels such as KCNH2. Dephosphorylate FNIP1, disrupting interaction with HSP90AA1/Hsp90. The polypeptide is Serine/threonine-protein phosphatase 5 (PPP5C) (Homo sapiens (Human)).